A 528-amino-acid polypeptide reads, in one-letter code: Equilibrative nucleoside transporter 4 (528 aa).

Topologically, residues 1 to 68 (MGSIGSQRLK…EEPVPDDRYH (68 aa)) are extracellular. The helical transmembrane segment at 69 to 89 (AIYFAMLLAGVGFLLPYNSFI) threads the bilayer. At 90–101 (TDVDYLHHKYPG) the chain is on the cytoplasmic side. Residues 102-122 (TSIVFDMSLTYILVALAAVLL) form a helical membrane-spanning segment. At 123–139 (NNVVVERLNLHTRITTG) the chain is on the extracellular side. Residues 140–160 (YLLALGPLLFISICDVWLQLF) traverse the membrane as a helical segment. Over 161-166 (SHDQAY) the chain is Cytoplasmic. Residues 167-187 (AINLAAVGTVAFGCTVQQSSF) form a helical membrane-spanning segment. Residues 188 to 231 (YGYTGLLPKRYTQGVMTGESTAGVMISLSRILTKLLLPDERAST) lie on the Extracellular side of the membrane. Residues 232–252 (IIFFLVSAGLELLCFLLHLLV) form a helical membrane-spanning segment. The Cytoplasmic portion of the chain corresponds to 253 to 346 (RRSRFVLYYT…LLLHRYVVAR (94 aa)). The helical transmembrane segment at 347–367 (VIWADMLSIAVTYFITLCLFP) threads the bilayer. Residues 368-376 (GLESEIRHC) lie on the Extracellular side of the membrane. The helical transmembrane segment at 377-397 (VLGEWLPILVMAVFNLSDFVG) threads the bilayer. The Cytoplasmic portion of the chain corresponds to 398 to 411 (KILAALPVEWRGTH). Residues 412-432 (LLACSCLRVVFIPLFILCVYP) traverse the membrane as a helical segment. The Extracellular portion of the chain corresponds to 433–445 (SGMPALRHPAWPC). Residues 446-466 (VFSLLMGISNGYFGSVPMILA) traverse the membrane as a helical segment. Residues 467 to 481 (AGKVSPKQRELAGNT) lie on the Cytoplasmic side of the membrane. A helical membrane pass occupies residues 482–504 (MTVSYMSGLTLGSAVAYCTYSLT). Residues 505-528 (RDAHGSCFQTATAAAANDSIPVGP) lie on the Extracellular side of the membrane. N-linked (GlcNAc...) asparagine glycosylation is present at asparagine 521.

This sequence belongs to the SLC29A/ENT transporter (TC 2.A.57) family. In terms of processing, N-glycosylated. As to expression, expressed in heart. Expressed in choroid plexus.

The protein resides in the cell membrane. It is found in the apical cell membrane. The enzyme catalyses serotonin(out) = serotonin(in). It carries out the reaction dopamine(out) = dopamine(in). It catalyses the reaction (R)-noradrenaline(out) = (R)-noradrenaline(in). The catalysed reaction is (R)-adrenaline(out) = (R)-adrenaline(in). The enzyme catalyses histamine(out) = histamine(in). It carries out the reaction tyramine(in) = tyramine(out). It catalyses the reaction guanidine(out) = guanidine(in). The catalysed reaction is adenine(out) = adenine(in). The enzyme catalyses adenosine(in) = adenosine(out). Activated at acidic pH. Its function is as follows. Electrogenic voltage-dependent transporter that mediates the transport of a variety of endogenous bioactive amines, cationic xenobiotics and drugs. Utilizes the physiologic inside-negative membrane potential as a driving force to facilitate cellular uptake of organic cations. Functions as a Na(+)- and Cl(-)-independent bidirectional transporter. Substrate transport is pH-dependent and enhanced under acidic condition, which is most likely the result of allosteric changes in the transporter structure. Implicated in monoamine neurotransmitters uptake such as serotonin, dopamine, adrenaline/epinephrine, noradrenaline/norepinephrine, histamine and tyramine, thereby supporting a role in homeostatic regulation of aminergic neurotransmission in the central nervous system. Also responsible for the uptake of bioactive amines and drugs through the blood-cerebrospinal fluid (CSF) barrier, from the CSF into choroid plexus epithelial cells, thereby playing a significant role in the clearance of cationic neurotoxins, xenobiotics and metabolic waste in the brain. Involved in bidirectional transport of the purine nucleoside adenosine and plays a role in the regulation of extracellular adenosine concentrations in cardiac tissues, in particular during ischemia. May be involved in organic cation uptake from the tubular lumen into renal tubular cells, thereby contributing to organic cation reabsorption in the kidney. Also transports adenine and guanidine. The chain is Equilibrative nucleoside transporter 4 from Mus musculus (Mouse).